The sequence spans 611 residues: Glutamine--fructose-6-phosphate aminotransferase [isomerizing] (611 aa).

C2 serves as the catalytic Nucleophile; for GATase activity. Residues 2–219 (CGIVGAVAER…EGDIAEIRRD (218 aa)) form the Glutamine amidotransferase type-2 domain. SIS domains lie at 287-427 (AAEL…VKGS) and 460-601 (VAEL…VDQP). Residue K606 is the For Fru-6P isomerization activity of the active site.

As to quaternary structure, homodimer.

The protein localises to the cytoplasm. It carries out the reaction D-fructose 6-phosphate + L-glutamine = D-glucosamine 6-phosphate + L-glutamate. Its function is as follows. Catalyzes the first step in hexosamine metabolism, converting fructose-6P into glucosamine-6P using glutamine as a nitrogen source. In Pseudomonas syringae pv. tomato (strain ATCC BAA-871 / DC3000), this protein is Glutamine--fructose-6-phosphate aminotransferase [isomerizing].